The primary structure comprises 42 residues: Photosystem II reaction center protein J (42 aa).

Residues 10-30 (IPLWLIATVAGILVLTVVGIF) traverse the membrane as a helical segment.

Belongs to the PsbJ family. As to quaternary structure, PSII is composed of 1 copy each of membrane proteins PsbA, PsbB, PsbC, PsbD, PsbE, PsbF, PsbH, PsbI, PsbJ, PsbK, PsbL, PsbM, PsbT, PsbX, PsbY, PsbZ, Psb30/Ycf12, at least 3 peripheral proteins of the oxygen-evolving complex and a large number of cofactors. It forms dimeric complexes.

The protein localises to the plastid. It localises to the chloroplast thylakoid membrane. Its function is as follows. One of the components of the core complex of photosystem II (PSII). PSII is a light-driven water:plastoquinone oxidoreductase that uses light energy to abstract electrons from H(2)O, generating O(2) and a proton gradient subsequently used for ATP formation. It consists of a core antenna complex that captures photons, and an electron transfer chain that converts photonic excitation into a charge separation. The sequence is that of Photosystem II reaction center protein J from Chara vulgaris (Common stonewort).